Reading from the N-terminus, the 299-residue chain is MTEHKSGFVSIIGRPNVGKSTFVNRVIGHKIAIMSDKAQTTRNKIQGVMTRDDAQIIFIDTPGIHKPKHKLGDYMMKVAKNTLSEIDAIMFMVNANEEIGRGDEYIIEMLKNVKTPVFLVLNKIDLVHPDELMPKIEEYQSYMDFTEIVPISALEGLNVDHFIDVLKTYLPEGPKYYPDDQISDHPEQFVVGEIIREKILHLTSEEIPHAIGVNVDRMVKESEDRVHIEATIYVERDSQKGIVIGKGGKKLKEVGKRARRDIEMLLGSKVYLELWVKVQRDWRNKVNFIRQIGYVEDQD.

The Era-type G domain occupies 5-172 (KSGFVSIIGR…IDVLKTYLPE (168 aa)). Residues 13–20 (GRPNVGKS) are G1. A GTP-binding site is contributed by 13 to 20 (GRPNVGKS). The interval 39-43 (QTTRN) is G2. The interval 60-63 (DTPG) is G3. GTP contacts are provided by residues 60 to 64 (DTPGI) and 122 to 125 (NKID). A G4 region spans residues 122 to 125 (NKID). Residues 151-153 (ISA) form a G5 region. Residues 203-280 (TSEEIPHAIG…YLELWVKVQR (78 aa)) form the KH type-2 domain.

It belongs to the TRAFAC class TrmE-Era-EngA-EngB-Septin-like GTPase superfamily. Era GTPase family. As to quaternary structure, monomer.

It localises to the cytoplasm. The protein resides in the cell membrane. Functionally, an essential GTPase that binds both GDP and GTP, with rapid nucleotide exchange. Plays a role in 16S rRNA processing and 30S ribosomal subunit biogenesis and possibly also in cell cycle regulation and energy metabolism. This Staphylococcus aureus (strain Mu3 / ATCC 700698) protein is GTPase Era.